The primary structure comprises 328 residues: NADH-cytochrome b5 reductase-like protein (328 aa).

The region spanning 76 to 184 (DKWLEFKLQD…KGPVEKFKYS (109 aa)) is the FAD-binding FR-type domain. A Phosphothreonine modification is found at T201.

The protein belongs to the flavoprotein pyridine nucleotide cytochrome reductase family. Requires FAD as cofactor.

The protein localises to the mitochondrion. It catalyses the reaction 2 Fe(III)-[cytochrome b5] + NADH = 2 Fe(II)-[cytochrome b5] + NAD(+) + H(+). Functionally, desaturation and elongation of fatty acids. The chain is NADH-cytochrome b5 reductase-like protein (CBR2) from Arabidopsis thaliana (Mouse-ear cress).